A 1176-amino-acid chain; its full sequence is MSITCELLNLTSKKAKKSSSSDKKWLKKPLFFLILCGSLVIVLVMFLRLGRSQKEETDSCNGEEKVLYRHQNVTRSEIHDLVSLFSDSDQVTSFECHKESSPGMWTNYGITCSLSVRSDKQETRGLPWNLGLGHSISSTSCMCGNLEPILQQPENLEEENHEEGLEQGLSSYLRNAWWCLILGVLVCHKIYVSHSKARGERKEKVHLQEALAPKKQQQRAQTSSRGAGRWRKNILLLGILGGVSFSVWWFWDTNEEIIMKRRETLANMCDERARVLQDQFNVSLNHVHALSILVSTFHHGKIPSAIDQRTFEEYTERTNFERPLTSGVAYALKVPHSEREKFEKEHGWAIKKMETEDQTVVQDCVPENFDPAPIQDEYAPVIFAQETVSHIVSVDMMSGEEDRENILRARASGKGVLTSPFKLLKSNHLGVVLTFAVYDTSLPPDATEEQRVEATIGYLGASYDMPSLVEKLLHQLASKQTIAVDVYDTTNTSGLIKMYGSEIGDISEQHISSLDFGDPSRNHEMHCRFKHKLPIPWTAITPSILVLVITFLVGYILYEAINRIATVEEDCQKMRELKARAEAADIAKSQFLATVSHEIRTPMNGVLGMLKMLMDTDLDAKQMDYAQTAHGSGKDLTSLINEVLDQAKIESGRLELENVPFDMRFILDNVSSLLSGKANEKGIELAVYVSSQVPDVVVGDPSRFRQIITNLVGNSIKFTQERGHIFISVHLADEVKEPLTIEDAVLKQRLALGCSESGETVSGFPAVNAWGSWKNFKTCYSTESQNSDQIKLLVTVEDTGVGIPVDAQGRIFTPFMQADSSTSRTYGGTGIGLSISKRLVELMQGEMGFVSEPGIGSTFSFTGVFGKAETNTSITKLERFDLAIQEFTGLRALVIDNRNIRAEVTRYELRRLGISADIVSSLRMACTCCISKLENLAMILIDKDAWNKEEFSVLDELFTRSKVTFTRVPKIFLLATSATLTERSEMKSTGLIDEVVIKPLRMSVLICCLQETLVNGKKRQPNRQRRNLGHLLREKQILVVDDNLVNRRVAEGALKKYGAIVTCVESGKAALAMLKPPHNFDACFMDLQMPEMDGFEATRRVRELEREINKKIASGEVSAEMFCKFSSWHVPILAMTADVIQATHEECMKCGMDGYVSKPFEEEVLYTAVARFFEPC.

Over 1–29 the chain is Cytoplasmic; the sequence is MSITCELLNLTSKKAKKSSSSDKKWLKKP. The chain crosses the membrane as a helical span at residues 30–50; the sequence is LFFLILCGSLVIVLVMFLRLG. Residues 51 to 174 are Extracellular-facing; the sequence is RSQKEETDSC…LEQGLSSYLR (124 aa). The chain crosses the membrane as a helical span at residues 175–195; it reads NAWWCLILGVLVCHKIYVSHS. Residues 196–232 are Cytoplasmic-facing; that stretch reads KARGERKEKVHLQEALAPKKQQQRAQTSSRGAGRWRK. The helical transmembrane segment at 233 to 253 threads the bilayer; that stretch reads NILLLGILGGVSFSVWWFWDT. The Extracellular portion of the chain corresponds to 254 to 536; the sequence is NEEIIMKRRE…CRFKHKLPIP (283 aa). Residues 302 to 526 form the CHASE domain; sequence IPSAIDQRTF…GDPSRNHEMH (225 aa). Residues 537–557 form a helical membrane-spanning segment; the sequence is WTAITPSILVLVITFLVGYIL. Over 558-1176 the chain is Cytoplasmic; that stretch reads YEAINRIATV…TAVARFFEPC (619 aa). Residues 594–867 form the Histidine kinase domain; it reads TVSHEIRTPM…TFSFTGVFGK (274 aa). His597 bears the Phosphohistidine; by autocatalysis mark. 2 consecutive Response regulatory domains span residues 891-1013 and 1036-1173; these read RALV…QETL and QILV…ARFF. A 4-aspartylphosphate mark is found at Asp942 and Asp1086.

Self-interacts. Interacts with AHK3, AHP1, AHP2, AHP3, AHP5, ATAF2, AT2S3, BETAA-AD, CYP20-2, DRP1A, HIR1, HIR2, PI4KB1, PI4KG5 and At4g12060. Autophosphorylated predominantly on His residues. Activation probably requires a transfer of a phosphate group between a His in the transmitter domain and an Asp of the receiver domain. As to expression, expressed in roots, leaves and flowers, mostly in the vascular tissues. Present in seedlings.

The protein resides in the endoplasmic reticulum membrane. The enzyme catalyses ATP + protein L-histidine = ADP + protein N-phospho-L-histidine.. With respect to regulation, activated by cytokinins to initiate phosphorelay signaling. Functionally, cytokinins (CK) receptor related to bacterial two-component regulators. Functions as a histidine kinase and transmits the stress signal to a downstream MAPK cascade. This protein undergoes an ATP-dependent autophosphorylation at a conserved histidine residue in the kinase core, and a phosphoryl group is then transferred to a conserved aspartate residue in the receiver domain. In the presence of cytokinin, feeds phosphate to phosphorelay-integrating histidine phosphotransfer protein (HPt) and activates subsequent cascade. Involved in meristems establishment in seedlings. Redundant negative regulator of drought and salt stress responses and abscisic acid (ABA) signaling. Together with AHK3, plays a negative regulatory role in cold stress signaling via inhibition of ABA response, occurring independently of the cold acclimation pathway. Redundant positive regulator of cytokinin signaling that regulates many developmental processes including seed germination, cell division, seed size, chlorophyll retention during leaf senescence, root repression and shoot promotion. Involved in alkamides (e.g. N-isobutyl decanamide) and N-acylethanolamides (NAE) signaling that control meristematic activity and differentiation processes during plant development. Contributes to vascular bundle formation and secondary growth in a cytokinin-dependent manner, probably by promoting the maintenance of mitotic activity and/or identity of procambial cells. Together with AHK4, required for growth and reproduction promotion stimulated by the endophytic fungus Piriformospora indica in a trans-zeatin-dependent manner. Required by the cytokinin-dependent flower development regulation pathway. This is Histidine kinase 2 (AHK2) from Arabidopsis thaliana (Mouse-ear cress).